We begin with the raw amino-acid sequence, 553 residues long: 5'-nucleotidase domain-containing protein 2 (553 aa).

The disordered stretch occupies residues Ser26–Pro51. The Nucleophile role is filled by Asp106. 3 residues coordinate Mg(2+): Asp106, Asp108, and Asp391. Residue Asp108 is the Proton donor of the active site.

This sequence belongs to the 5'(3')-deoxyribonucleotidase family. In terms of assembly, interacts with tyrosine 3-monooxygenase TH; the interaction results in reduced phosphorylation and decreased catalytic activity of TH. In terms of tissue distribution, expressed in eye iridocorneal angle.

Its subcellular location is the cytoplasm. Functionally, promotes dephosphorylation of tyrosine 3-monooxygenase TH which decreases TH catalytic activity and leads to reduced synthesis of catecholamines including dopamine, noradrenaline and adrenaline. The exact mechanism of activity is unknown but may act as a phosphatase or promote the activity of phosphatases or may inhibit phosphorylation by acting as a barrier to interfere with protein kinase access. This chain is 5'-nucleotidase domain-containing protein 2 (Nt5dc2), found in Rattus norvegicus (Rat).